We begin with the raw amino-acid sequence, 498 residues long: Protein flp (498 aa).

4 consecutive transmembrane segments (helical) span residues 6-26 (LYFLSISIIILVAISIAIYIT), 389-409 (FNIVTVLMTTLILLAFIFSAY), 433-453 (LSLCICIALALILYALPYLIL), and 471-491 (LALITTLIALFSTLIVILLFL).

The protein resides in the cell membrane. Its function is as follows. Its precise function is unknown. Has no penicillin-binding activity and is not involved in methicillin resistance. The sequence is that of Protein flp (flp) from Staphylococcus aureus (strain NCTC 8325 / PS 47).